The primary structure comprises 1734 residues: Gag-Pol polyprotein (1734 aa).

G2 carries the N-myristoyl glycine; by host lipid modification. The PTAP/PSAP motif motif lies at 109–112 (PTAP). A disordered region spans residues 112–217 (PILPSGPSTQ…STTSRAFPLR (106 aa)). Residues 128–132 (LYPAL) carry the LYPX(n)L motif motif. The PPXY motif signature appears at 161–164 (PPPY). S191 carries the phosphoserine; by host modification. The interval 344 to 392 (GRSPTNLAKVKGITQGPNESPSAFLERLKEAYRRYTPYDPEDHGQETSV) is interaction with host PIAS4. Residues 429–434 (IFNKRE) are interaction with host UBE2I. Basic and acidic residues-rich tracts occupy residues 433–474 (RETP…REMS) and 485–498 (RQDRQGGERKRPQL). Disordered stretches follow at residues 433 to 498 (RETP…RPQL) and 512 to 551 (WAKDCPKKPRGPRGPRPQTSLLTLDDQGGQGQEPPPEPRI). A coiled-coil region spans residues 437 to 477 (EEREERFRRETEENEERRRAEDEQREKERDRRRQREMSKLL). The CCHC-type zinc-finger motif lies at 501-518 (DQCAYCKEKGHWAKDCPK). The region spanning 560 to 630 (VTFLVDTGAQ…CPYPLLGRDL (71 aa)) is the Peptidase A2 domain. D565 serves as the catalytic Protease; shared with dimeric partner. In terms of domain architecture, Reverse transcriptase spans 740–931 (LDQGILVPCQ…KQVKYLGYLL (192 aa)). D808, D882, D883, D1182, E1220, D1241, and D1311 together coordinate Mg(2+). The region spanning 1173–1319 (PDADHTWYTD…ADQAAREAAI (147 aa)) is the RNase H type-1 domain. An HHCC-type zinc finger spans residues 1386-1426 (HRLTHLGYQKMKALLDRGESPYYMLNRDKTLQYVADSCTVC). The 159-residue stretch at 1443 to 1601 (RGHRPGTHWE…TPYEILYGAP (159 aa)) folds into the Integrase catalytic domain. Mg(2+) contacts are provided by D1454 and D1513.

The protein belongs to the retroviral Pol polyprotein family. As to quaternary structure, homohexamer; further associates as homomultimer. The virus core is composed of a lattice formed from hexagonal rings, each containing six capsid monomers. Interacts with mouse UBE2I and mouse PIAS4. In terms of assembly, interacts (via PPXY motif) with host NEDD4. Interacts (via PSAP motif) with host TSG101. Interacts (via LYPX(n)L motif) with host PDCD6IP. The reverse transcriptase is a monomer (Potential). Interacts (via RNase domains) with host release factor ETF1; this interaction is essential for translational readthrough of amber codon between viral gag and pol genes, as well as for viral replication. As to quaternary structure, homodimer. It depends on Mg(2+) as a cofactor. Post-translationally, ubiquitinated by ITCH. Gag can recruit the ubiquitin ligase Itch in an L domain-independent manner to facilitate virus release via a mechanism that involves Gag ubiquitination. In terms of processing, specific enzymatic cleavages by the viral protease yield mature proteins. The protease is released by autocatalytic cleavage. The polyprotein is cleaved during and after budding, this process is termed maturation. Sumoylated; which is required for virus replication. Post-translationally, phosphorylated on serine residues.

It localises to the virion. Its subcellular location is the host cell membrane. The protein localises to the host late endosome membrane. It is found in the host endosome. The protein resides in the host multivesicular body. It localises to the host cytoplasm. The catalysed reaction is DNA(n) + a 2'-deoxyribonucleoside 5'-triphosphate = DNA(n+1) + diphosphate. It catalyses the reaction Endonucleolytic cleavage to 5'-phosphomonoester.. With respect to regulation, most efficiently inhibited by Amprenavir, which is able to block Gag-Pol processing in infected cells. Plays a role in budding and is processed by the viral protease during virion maturation outside the cell. During budding, it recruits, in a PPXY-dependent or independent manner, Nedd4-like ubiquitin ligases that conjugate ubiquitin molecules to Gag-Pol, or to Gag-Pol binding host factors. Interaction with HECT ubiquitin ligases probably links the viral protein to the host ESCRT pathway and facilitates release. In terms of biological role, targets Gag and gag-pol polyproteins to the plasma membrane via a multipartite membrane binding signal, that includes its myristoylated N-terminus. Also mediates nuclear localization of the pre-integration complex. Its function is as follows. Constituent of the pre-integration complex (PIC) which tethers the latter to mitotic chromosomes. This allows the integration of the viral genome into the host DNA. Functionally, forms the spherical core of the virion that encapsulates the genomic RNA-nucleocapsid complex. Involved in the packaging and encapsidation of two copies of the genome. Binds with high affinity to conserved UCUG elements within the packaging signal, located near the 5'-end of the genome. This binding is dependent on genome dimerization. Acts as a nucleic acid chaperone which is involved in rearrangement of nucleic acid secondary structures during gRNA retrotranscription. In terms of biological role, the aspartyl protease mediates proteolytic cleavages of Gag and Gag-Pol polyproteins during or shortly after the release of the virion from the plasma membrane. Cleavages take place as an ordered, step-wise cascade to yield mature proteins. This process is called maturation. Displays maximal activity during the budding process just prior to particle release from the cell (Potential). Cleaves the translation initiation factor eIF4G leading to the inhibition of host cap-dependent translation. Its function is as follows. RT is a multifunctional enzyme that converts the viral dimeric RNA genome into dsDNA in the cytoplasm, shortly after virus entry into the cell. This enzyme displays a DNA polymerase activity that can copy either DNA or RNA templates, and a ribonuclease H (RNase H) activity that cleaves the RNA strand of RNA-DNA heteroduplexes in a partially processive 3' to 5' endonucleasic mode. Conversion of viral genomic RNA into dsDNA requires many steps. A tRNA binds to the primer-binding site (PBS) situated at the 5' end of the viral RNA. RT uses the 3' end of the tRNA primer to perform a short round of RNA-dependent minus-strand DNA synthesis. The reading proceeds through the U5 region and ends after the repeated (R) region which is present at both ends of viral RNA. The portion of the RNA-DNA heteroduplex is digested by the RNase H, resulting in a ssDNA product attached to the tRNA primer. This ssDNA/tRNA hybridizes with the identical R region situated at the 3' end of viral RNA. This template exchange, known as minus-strand DNA strong stop transfer, can be either intra- or intermolecular. RT uses the 3' end of this newly synthesized short ssDNA to perform the RNA-dependent minus-strand DNA synthesis of the whole template. RNase H digests the RNA template except for a polypurine tract (PPT) situated at the 5' end of the genome. It is not clear if both polymerase and RNase H activities are simultaneous. RNase H probably can proceed both in a polymerase-dependent (RNA cut into small fragments by the same RT performing DNA synthesis) and a polymerase-independent mode (cleavage of remaining RNA fragments by free RTs). Secondly, RT performs DNA-directed plus-strand DNA synthesis using the PPT that has not been removed by RNase H as primers. PPT and tRNA primers are then removed by RNase H. The 3' and 5' ssDNA PBS regions hybridize to form a circular dsDNA intermediate. Strand displacement synthesis by RT to the PBS and PPT ends produces a blunt ended, linear dsDNA copy of the viral genome that includes long terminal repeats (LTRs) at both ends. Functionally, catalyzes viral DNA integration into the host chromosome, by performing a series of DNA cutting and joining reactions. This enzyme activity takes place after virion entry into a cell and reverse transcription of the RNA genome in dsDNA. The first step in the integration process is 3' processing. This step requires a complex comprising the viral genome, matrix protein and integrase. This complex is called the pre-integration complex (PIC). The integrase protein removes 2 nucleotides from each 3' end of the viral DNA, leaving recessed CA OH's at the 3' ends. In the second step that requires cell division, the PIC enters cell nucleus. In the third step, termed strand transfer, the integrase protein joins the previously processed 3' ends to the 5' ends of strands of target cellular DNA at the site of integration. The last step is viral DNA integration into host chromosome. The protein is Gag-Pol polyprotein (pol) of Mus musculus (Mouse).